We begin with the raw amino-acid sequence, 152 residues long: 3-dehydroquinate dehydratase (152 aa).

Catalysis depends on tyrosine 26, which acts as the Proton acceptor. Substrate contacts are provided by asparagine 77, histidine 83, and aspartate 90. Residue histidine 103 is the Proton donor of the active site. Substrate-binding positions include leucine 104–serine 105 and arginine 114.

This sequence belongs to the type-II 3-dehydroquinase family. As to quaternary structure, homododecamer.

It catalyses the reaction 3-dehydroquinate = 3-dehydroshikimate + H2O. Its pathway is metabolic intermediate biosynthesis; chorismate biosynthesis; chorismate from D-erythrose 4-phosphate and phosphoenolpyruvate: step 3/7. Functionally, catalyzes a trans-dehydration via an enolate intermediate. The chain is 3-dehydroquinate dehydratase (aroQ) from Synechocystis sp. (strain ATCC 27184 / PCC 6803 / Kazusa).